The chain runs to 122 residues: Large ribosomal subunit protein bL12 (122 aa).

This sequence belongs to the bacterial ribosomal protein bL12 family. Homodimer. Part of the ribosomal stalk of the 50S ribosomal subunit. Forms a multimeric L10(L12)X complex, where L10 forms an elongated spine to which 2 to 4 L12 dimers bind in a sequential fashion. Binds GTP-bound translation factors.

Forms part of the ribosomal stalk which helps the ribosome interact with GTP-bound translation factors. Is thus essential for accurate translation. The polypeptide is Large ribosomal subunit protein bL12 (Streptococcus pneumoniae serotype 19F (strain G54)).